A 310-amino-acid polypeptide reads, in one-letter code: UDP-N-acetylenolpyruvoylglucosamine reductase (310 aa).

The FAD-binding PCMH-type domain maps to 30 to 200; the sequence is RVGGPAQWLA…VAAEFQLEPG (171 aa). Residue Arg-179 is part of the active site. The active-site Proton donor is the Ser-230. Glu-300 is a catalytic residue.

It belongs to the MurB family. The cofactor is FAD.

The protein localises to the cytoplasm. The catalysed reaction is UDP-N-acetyl-alpha-D-muramate + NADP(+) = UDP-N-acetyl-3-O-(1-carboxyvinyl)-alpha-D-glucosamine + NADPH + H(+). The protein operates within cell wall biogenesis; peptidoglycan biosynthesis. In terms of biological role, cell wall formation. The polypeptide is UDP-N-acetylenolpyruvoylglucosamine reductase (Synechococcus sp. (strain WH7803)).